Reading from the N-terminus, the 240-residue chain is Ribosomal RNA large subunit methyltransferase E (240 aa).

Over residues 1-13 (MAKKPGSQNTSGR) the composition is skewed to polar residues. The disordered stretch occupies residues 1–20 (MAKKPGSQNTSGRGQRDLKV). S-adenosyl-L-methionine contacts are provided by glycine 85, tryptophan 87, aspartate 113, aspartate 129, and aspartate 153. Residue lysine 193 is the Proton acceptor of the active site.

This sequence belongs to the class I-like SAM-binding methyltransferase superfamily. RNA methyltransferase RlmE family.

The protein localises to the cytoplasm. It carries out the reaction uridine(2552) in 23S rRNA + S-adenosyl-L-methionine = 2'-O-methyluridine(2552) in 23S rRNA + S-adenosyl-L-homocysteine + H(+). In terms of biological role, specifically methylates the uridine in position 2552 of 23S rRNA at the 2'-O position of the ribose in the fully assembled 50S ribosomal subunit. The polypeptide is Ribosomal RNA large subunit methyltransferase E (Roseobacter denitrificans (strain ATCC 33942 / OCh 114) (Erythrobacter sp. (strain OCh 114))).